A 149-amino-acid polypeptide reads, in one-letter code: UPF0179 protein rrnAC1064 (149 aa).

The protein belongs to the UPF0179 family.

This Haloarcula marismortui (strain ATCC 43049 / DSM 3752 / JCM 8966 / VKM B-1809) (Halobacterium marismortui) protein is UPF0179 protein rrnAC1064.